The chain runs to 289 residues: Paired box protein 5 homolog (289 aa).

The segment at residues serine 29–lysine 155 is a DNA-binding region (paired). The PAI subdomain stretch occupies residues glycine 32–threonine 88. Residues arginine 107–lysine 155 are RED subdomain. Low complexity-rich tracts occupy residues serine 166 to serine 179 and valine 189 to serine 198. Positions serine 166–serine 198 are disordered.

It is found in the nucleus. The protein resides in the chromosome. In terms of biological role, transcription factor. Binds to specific DNA sequence motifs in regulatory elements, for example in the genes encoding transcription factor lin-48, apoptosis regulator ced-9 and neuropeptide-like protein nlp-2. Specifies cell fate, playing an essential role in embryonic and larval development. Involved in morphogenesis of the vulva and uterus in hermaphrodites and of the rectal epithelium of the tail in males. Plays multiple roles in the development of the egg-laying system, acting in both lin-3/EGF-pathway-dependent and -independent processes. Positively regulates expression of neuropeptide-like proteins nlp-2 and nlp-7 in uvl cells in an EGF-pathway-dependent manner. Involved in negatively modulating apoptosis in germline and somatic cells, acting in partial redundancy with transcription factor pax-2, probably by directly regulating transcription of ced-9. Positively regulates transcription of lin-48 in hindgut cells and functions in the development of the hindgut. The protein is Paired box protein 5 homolog of Caenorhabditis elegans.